The following is a 96-amino-acid chain: Co-chaperonin GroES (96 aa).

This sequence belongs to the GroES chaperonin family. Heptamer of 7 subunits arranged in a ring. Interacts with the chaperonin GroEL.

Its subcellular location is the cytoplasm. Its function is as follows. Together with the chaperonin GroEL, plays an essential role in assisting protein folding. The GroEL-GroES system forms a nano-cage that allows encapsulation of the non-native substrate proteins and provides a physical environment optimized to promote and accelerate protein folding. GroES binds to the apical surface of the GroEL ring, thereby capping the opening of the GroEL channel. The sequence is that of Co-chaperonin GroES from Colwellia maris.